A 681-amino-acid chain; its full sequence is MIDRYKHQQLRIGSVSPQQISAWATKILPNGEIVGEVTKPYTFHYKTNKPEKDGLFCERIFGPIKSGICACGNYRVIGDEKEDPKFCEQCGVEFVDSRIRRYQMGYIKLACPVTHVWYLKRLPSYIANLLDKPLKELEGLVYCDFSFARPITKKPTFLRLRGLFEYEIQSWKYSIPLFFTTQGFDTFRNREISTGAGAIREQLADLDLRIIIENSLVEWEELGEEGHTGNEWEDRKVGRRKDFLVRRVELAKHFIRTNIEPEWMVLCLLPVLPPELRPIIQIDGGKLMSSDINELYRRVIYRNNTLTDLLTTSRSTPVELVMCQEKLVQEAVDTLLDNGIRGQPMRDGHNKVYKSFSDVIEGKEGRFRETLLGKRVDYSGRSVIVVGPSLSLHRCGLPREIAIELFQTFVIRGLIRQHLASNIGVAKSQIREKEPIVWEILQEVMQGHPVLLNRAPTLHRLGIQAFQPVLVAGRAICLHPLVCKGFNADFDGDQMAVHVPLSLEAQVEARLLMFSHMNLLSPAIGDPISVPTQDMLIGLYVLTSGNPRGICVNRYNPCNRINYQNKKRSDNSHYKYTKEPFFSNSYDAIGAYRQKRINLDSPLWLRWRLDQRVIASRETPIEVHYESLGTFYEIYGHYLIVRSLKKQILFIYIRTTVGHIALYREIEEAIQGFSRAYSYGT.

Residues C69, C71, C87, and C90 each contribute to the Zn(2+) site. Mg(2+) is bound by residues D489, D491, and D493.

Belongs to the RNA polymerase beta' chain family. RpoC1 subfamily. As to quaternary structure, in plastids the minimal PEP RNA polymerase catalytic core is composed of four subunits: alpha, beta, beta', and beta''. When a (nuclear-encoded) sigma factor is associated with the core the holoenzyme is formed, which can initiate transcription. Mg(2+) serves as cofactor. The cofactor is Zn(2+).

The protein localises to the plastid. The protein resides in the chloroplast. It catalyses the reaction RNA(n) + a ribonucleoside 5'-triphosphate = RNA(n+1) + diphosphate. DNA-dependent RNA polymerase catalyzes the transcription of DNA into RNA using the four ribonucleoside triphosphates as substrates. The chain is DNA-directed RNA polymerase subunit beta' from Nicotiana tomentosiformis (Tobacco).